The following is a 381-amino-acid chain: Spermidine/putrescine import ATP-binding protein PotA (381 aa).

Positions 19–249 (VELRKVFKVF…PESPFVADFI (231 aa)) constitute an ABC transporter domain. Residue 51–58 (GPSGCGKT) participates in ATP binding.

This sequence belongs to the ABC transporter superfamily. Spermidine/putrescine importer (TC 3.A.1.11.1) family. As to quaternary structure, the complex is composed of two ATP-binding proteins (PotA), two transmembrane proteins (PotB and PotC) and a solute-binding protein (PotD).

The protein localises to the cell inner membrane. It carries out the reaction ATP + H2O + polyamine-[polyamine-binding protein]Side 1 = ADP + phosphate + polyamineSide 2 + [polyamine-binding protein]Side 1.. In terms of biological role, part of the ABC transporter complex PotABCD involved in spermidine/putrescine import. Responsible for energy coupling to the transport system. This is Spermidine/putrescine import ATP-binding protein PotA from Trichodesmium erythraeum (strain IMS101).